Consider the following 890-residue polypeptide: DNA mismatch repair protein MutS (890 aa).

Position 634-641 (634-641 (GPNMGGKS)) interacts with ATP.

Belongs to the DNA mismatch repair MutS family.

In terms of biological role, this protein is involved in the repair of mismatches in DNA. It is possible that it carries out the mismatch recognition step. This protein has a weak ATPase activity. This chain is DNA mismatch repair protein MutS, found in Burkholderia pseudomallei (strain 1710b).